Here is a 532-residue protein sequence, read N- to C-terminus: Intercellular adhesion molecule 1 (532 aa).

The first 27 residues, 1–27, serve as a signal peptide directing secretion; the sequence is MAPSSPRPALPALLVLLGALFPGPGNA. The Extracellular portion of the chain corresponds to 28–480; that stretch reads QTSVSPPKVI…TVNVLSPRYE (453 aa). 2 consecutive Ig-like C2-type domains span residues 41-103 and 128-193; these read GGSV…QSTA and GKDL…LDLR. Cystine bridges form between Cys48–Cys92, Cys52–Cys96, and Cys135–Cys186. A glycan (N-linked (GlcNAc...) asparagine) is linked at Asn145. The Cell attachment site; atypical signature appears at 152-154; sequence RGE. N-linked (GlcNAc...) asparagine glycans are attached at residues Asn183, Asn202, Asn267, and Asn296. 2 Ig-like C2-type domains span residues 230–297 and 325–378; these read DTQG…LGNQ and GTEV…LEVA. Residues Cys237 and Cys290 are joined by a disulfide bond. A disulfide bridge links Cys332 with Cys371. 2 N-linked (GlcNAc...) asparagine glycosylation sites follow: Asn385 and Asn406. Disulfide bonds link Cys403/Cys419, Cys419/Cys457, and Cys431/Cys457. The region spanning 412–464 is the Ig-like C2-type 5 domain; the sequence is NSQQTPMCQASGNPLPELKCLKDGTFPLPVGESVTVTRDLEGTYLCRARSTQG. The helical transmembrane segment at 481–503 threads the bilayer; it reads IVIITVVAAAVIMGTAGLSTYLY. Topologically, residues 504-532 are cytoplasmic; that stretch reads NRQRKIRKYRLQQAQKGTPMKPNTQATPP. Phosphothreonine is present on residues Thr521 and Thr530.

The protein belongs to the immunoglobulin superfamily. ICAM family. In terms of assembly, homodimer. Interacts with MUC1 and promotes cell aggregation in epithelial cells. Interacts with ARHGEF26/SGEF. Interacts (on T cell side) with CD81, CD247 and CD9 at immunological synapses between antigen-presenting cells and T cells. Monoubiquitinated, which is promoted by MARCH9 and leads to endocytosis.

The protein localises to the membrane. Its function is as follows. ICAM proteins are ligands for the leukocyte adhesion protein LFA-1 (integrin alpha-L/beta-2). During leukocyte trans-endothelial migration, ICAM1 engagement promotes the assembly of endothelial apical cups through ARHGEF26/SGEF and RHOG activation. The polypeptide is Intercellular adhesion molecule 1 (ICAM1) (Pan troglodytes (Chimpanzee)).